Consider the following 124-residue polypeptide: Fluoride-specific ion channel FluC (124 aa).

Helical transmembrane passes span 5-27, 70-90, and 95-115; these read LFVALGGSIGAVFRYLLSIFMLQ, VGLLGALTTFSTFSNETLLLI, and WIKAFFNIALNLCLCIFMVYL. Positions 74 and 77 each coordinate Na(+).

It belongs to the fluoride channel Fluc/FEX (TC 1.A.43) family.

It is found in the cell inner membrane. The catalysed reaction is fluoride(in) = fluoride(out). With respect to regulation, na(+) is not transported, but it plays an essential structural role and its presence is essential for fluoride channel function. Its function is as follows. Fluoride-specific ion channel. Important for reducing fluoride concentration in the cell, thus reducing its toxicity. In Shewanella sediminis (strain HAW-EB3), this protein is Fluoride-specific ion channel FluC.